Consider the following 471-residue polypeptide: Ribulose bisphosphate carboxylase large chain (471 aa).

Substrate contacts are provided by Asn119 and Thr169. Lys171 (proton acceptor) is an active-site residue. Lys173 serves as a coordination point for substrate. 3 residues coordinate Mg(2+): Lys197, Asp199, and Glu200. At Lys197 the chain carries N6-carboxylysine. His290 serves as the catalytic Proton acceptor. 3 residues coordinate substrate: Arg291, His323, and Ser375.

This sequence belongs to the RuBisCO large chain family. Type I subfamily. As to quaternary structure, heterohexadecamer of 8 large chains and 8 small chains; disulfide-linked. The disulfide link is formed within the large subunit homodimers. Mg(2+) is required as a cofactor. In terms of processing, the disulfide bond which can form in the large chain dimeric partners within the hexadecamer appears to be associated with oxidative stress and protein turnover.

The protein resides in the carboxysome. The catalysed reaction is 2 (2R)-3-phosphoglycerate + 2 H(+) = D-ribulose 1,5-bisphosphate + CO2 + H2O. It carries out the reaction D-ribulose 1,5-bisphosphate + O2 = 2-phosphoglycolate + (2R)-3-phosphoglycerate + 2 H(+). Its function is as follows. RuBisCO catalyzes two reactions: the carboxylation of D-ribulose 1,5-bisphosphate, the primary event in carbon dioxide fixation, as well as the oxidative fragmentation of the pentose substrate in the photorespiration process. Both reactions occur simultaneously and in competition at the same active site. This is Ribulose bisphosphate carboxylase large chain from Crocosphaera subtropica (strain ATCC 51142 / BH68) (Cyanothece sp. (strain ATCC 51142)).